Consider the following 995-residue polypeptide: Meckelin (995 aa).

A signal peptide spans 1-36 (MATRGGAGVAMAVWSLLSARAVTAFLLLFLPRFLQA). The segment at 37–280 (QTFSFPFQQP…FQFIFENTAG (244 aa)) is cysteine-rich. Over 37-519 (QTFSFPFQQP…SVTYEMDHGE (483 aa)) the chain is Extracellular. 11 disulfide bridges follow: C49–C62, C65–C78, C80–C97, C100–C114, C117–C127, C129–C150, C153–C170, C173–C184, C186–C197, C237–C246, and C253–C268. N141 carries N-linked (GlcNAc...) asparagine glycosylation. N-linked (GlcNAc...) asparagine glycosylation occurs at N179. N242 is a glycosylation site (N-linked (GlcNAc...) asparagine). N-linked (GlcNAc...) asparagine glycosylation occurs at N318. C357 and C378 are oxidised to a cystine. Residues 520–548 (AHVQTDIALGVLGGLAVLASLLKTAGWKR) form a helical membrane-spanning segment. Topologically, residues 549 to 558 (RIGSPMIDLQ) are cytoplasmic. Residues 559 to 590 (TVVKFLVYYAGDLANVFFIITVGTGLYWLIFF) form a helical membrane-spanning segment. At 591–603 (KAQKSVSVLLPMP) the chain is on the extracellular side. Residues 604–631 (IQEERFVTYVGCAFALKALQFLHKLISQ) form a helical membrane-spanning segment. Residues 632-670 (ITIDVFFIDWERPKGKVLKAVEGEGGVRSATVPVSIWRT) are Cytoplasmic-facing. The helical intramembrane region spans 671 to 679 (YFVANEWNE). Residues 671–701 (YFVANEWNEIQTVRKINSLFQVLTVLFFLEV) form a discontinuously helical membrane-spanning segment. An intramembrane segment occupies 680–688 (IQTVRKINS). The segment at residues 689 to 701 (LFQVLTVLFFLEV) is an intramembrane region (helical). Residues 702-731 (VGFKNLALMDSSSSLSRNPPSYIAPYSCIL) are Extracellular-facing. An intramembrane region (helical) is located at residues 732-757 (RYAVSAALWLAIGIIQVVFFAVFYER). Residues 732–771 (RYAVSAALWLAIGIIQVVFFAVFYERFIEDKIRQFVDLCS) traverse the membrane as a discontinuously helical segment. Residues 758–762 (FIEDK) lie within the membrane without spanning it. Positions 763–771 (IRQFVDLCS) form an intramembrane region, helical. Topologically, residues 772–926 (MSNISVFLLS…SIFYNDEGYS (155 aa)) are cytoplasmic. The stretch at 828–917 (GQTFEIAISN…MEFMEPMEKS (90 aa)) forms a coiled coil. Positions 927–929 (FSS) form an intramembrane region, helical. Residues 927–952 (FSSVLYYGNEATLLIFDLLFFCVVDL) form a discontinuously helical membrane-spanning segment. Residues 930–936 (VLYYGNE) lie within the membrane without spanning it. The helical intramembrane region spans 937–952 (ATLLIFDLLFFCVVDL). The Extracellular portion of the chain corresponds to 953–957 (ACQNF). The chain crosses the membrane as a helical span at residues 958–985 (ILASFLTYLQQEIFRYIRNTVGQKNLAS). Residues 986-995 (KTLVDQRFLI) lie on the Cytoplasmic side of the membrane.

As to quaternary structure, homodimer. Part of the tectonic-like complex (also named B9 complex). Interacts with DNAJB9, DNAJC10 and mutated SFTPC. Interacts with SYNE2 during the early establishment of cell polarity. Interacts (via C-terminus) with FLNA. Interacts with TMEM218. Interacts with WNT5A. Interacts with ROR2. Widely expressed in adult and fetal tissues. Expressed at higher level in spinal cord.

It is found in the cell membrane. Its subcellular location is the endoplasmic reticulum membrane. The protein localises to the cell projection. The protein resides in the cilium. It localises to the cytoplasm. It is found in the cytoskeleton. Its subcellular location is the cilium basal body. In terms of biological role, required for ciliary structure and function. Part of the tectonic-like complex which is required for tissue-specific ciliogenesis and may regulate ciliary membrane composition. Involved in centrosome migration to the apical cell surface during early ciliogenesis. Involved in the regulation of cilia length and appropriate number through the control of centrosome duplication. Is a key regulator of stereociliary bundle orientation. Required for epithelial cell branching morphology. Essential for endoplasmic reticulum-associated degradation (ERAD) of surfactant protein C (SFTPC). Involved in the negative regulation of canonical Wnt signaling, and activation of the non-canonical cascade stimulated by WNT5A. In non-canonical Wnt signaling, it may act as ROR2 coreceptor. The polypeptide is Meckelin (TMEM67) (Homo sapiens (Human)).